The primary structure comprises 187 residues: GTP cyclohydrolase 1 (187 aa).

Zn(2+) contacts are provided by cysteine 76, histidine 79, and cysteine 148.

The protein belongs to the GTP cyclohydrolase I family. As to quaternary structure, toroid-shaped homodecamer, composed of two pentamers of five dimers.

The enzyme catalyses GTP + H2O = 7,8-dihydroneopterin 3'-triphosphate + formate + H(+). The protein operates within cofactor biosynthesis; 7,8-dihydroneopterin triphosphate biosynthesis; 7,8-dihydroneopterin triphosphate from GTP: step 1/1. The sequence is that of GTP cyclohydrolase 1 from Streptococcus agalactiae serotype III (strain NEM316).